The chain runs to 209 residues: Na(+)-translocating NADH-quinone reductase subunit D (209 aa).

5 helical membrane passes run Leu42–Ile62, Val70–Leu90, Val103–Met123, Phe131–Val151, and Asn178–Leu198.

It belongs to the NqrDE/RnfAE family. In terms of assembly, composed of six subunits; NqrA, NqrB, NqrC, NqrD, NqrE and NqrF.

It is found in the cell inner membrane. The enzyme catalyses a ubiquinone + n Na(+)(in) + NADH + H(+) = a ubiquinol + n Na(+)(out) + NAD(+). Its function is as follows. NQR complex catalyzes the reduction of ubiquinone-1 to ubiquinol by two successive reactions, coupled with the transport of Na(+) ions from the cytoplasm to the periplasm. NqrA to NqrE are probably involved in the second step, the conversion of ubisemiquinone to ubiquinol. The chain is Na(+)-translocating NADH-quinone reductase subunit D from Yersinia enterocolitica serotype O:8 / biotype 1B (strain NCTC 13174 / 8081).